The primary structure comprises 199 residues: UPF0329 protein ECU01_0120/ECU01_1490/ECU08_0050 (199 aa).

The protein belongs to the UPF0329 family.

The sequence is that of UPF0329 protein ECU01_0120/ECU01_1490/ECU08_0050 from Encephalitozoon cuniculi (strain GB-M1) (Microsporidian parasite).